The primary structure comprises 60 residues: Large ribosomal subunit protein bL32 (60 aa).

The segment at 1 to 21 (MAVPARHTSKAKKNKRRTHYK) is disordered. Residues 7-20 (HTSKAKKNKRRTHY) are compositionally biased toward basic residues.

It belongs to the bacterial ribosomal protein bL32 family.

In Streptococcus uberis (strain ATCC BAA-854 / 0140J), this protein is Large ribosomal subunit protein bL32.